The sequence spans 1404 residues: DNA-directed RNA polymerase subunit beta' (1404 aa).

The Zn(2+) site is built by Cys-60, Cys-62, Cys-75, and Cys-78. Mg(2+) contacts are provided by Asp-449, Asp-451, and Asp-453. Positions 778, 852, 859, and 862 each coordinate Zn(2+). The segment at 1381–1404 (DRPLEEEEEEEIPQSIADDSDGDE) is disordered. Residues 1384-1404 (LEEEEEEEIPQSIADDSDGDE) are compositionally biased toward acidic residues.

The protein belongs to the RNA polymerase beta' chain family. As to quaternary structure, the RNAP catalytic core consists of 2 alpha, 1 beta, 1 beta' and 1 omega subunit. When a sigma factor is associated with the core the holoenzyme is formed, which can initiate transcription. Mg(2+) serves as cofactor. It depends on Zn(2+) as a cofactor.

It carries out the reaction RNA(n) + a ribonucleoside 5'-triphosphate = RNA(n+1) + diphosphate. In terms of biological role, DNA-dependent RNA polymerase catalyzes the transcription of DNA into RNA using the four ribonucleoside triphosphates as substrates. This Leptospira borgpetersenii serovar Hardjo-bovis (strain L550) protein is DNA-directed RNA polymerase subunit beta'.